We begin with the raw amino-acid sequence, 601 residues long: Aspartate--tRNA(Asp/Asn) ligase (601 aa).

Glu174 is a binding site for L-aspartate. The interval 198-201 is aspartate; the sequence is QLFK. Arg220 is an L-aspartate binding site. Residues 220–222 and Gln229 each bind ATP; that span reads RDE. His459 is a binding site for L-aspartate. Glu493 provides a ligand contact to ATP. An L-aspartate-binding site is contributed by Arg500. 545-548 provides a ligand contact to ATP; sequence GLDR.

It belongs to the class-II aminoacyl-tRNA synthetase family. Type 1 subfamily. In terms of assembly, homodimer.

The protein localises to the cytoplasm. It catalyses the reaction tRNA(Asx) + L-aspartate + ATP = L-aspartyl-tRNA(Asx) + AMP + diphosphate. In terms of biological role, aspartyl-tRNA synthetase with relaxed tRNA specificity since it is able to aspartylate not only its cognate tRNA(Asp) but also tRNA(Asn). Reaction proceeds in two steps: L-aspartate is first activated by ATP to form Asp-AMP and then transferred to the acceptor end of tRNA(Asp/Asn). The chain is Aspartate--tRNA(Asp/Asn) ligase from Variovorax paradoxus (strain S110).